The primary structure comprises 258 residues: Ribosomal RNA small subunit methyltransferase J (258 aa).

S-adenosyl-L-methionine is bound by residues 111-112 (RD), 127-128 (ER), and D179.

The protein belongs to the methyltransferase superfamily. RsmJ family.

The protein resides in the cytoplasm. It catalyses the reaction guanosine(1516) in 16S rRNA + S-adenosyl-L-methionine = N(2)-methylguanosine(1516) in 16S rRNA + S-adenosyl-L-homocysteine + H(+). In terms of biological role, specifically methylates the guanosine in position 1516 of 16S rRNA. This Alteromonas mediterranea (strain DSM 17117 / CIP 110805 / LMG 28347 / Deep ecotype) protein is Ribosomal RNA small subunit methyltransferase J.